Reading from the N-terminus, the 592-residue chain is 2-succinyl-5-enolpyruvyl-6-hydroxy-3-cyclohexene-1-carboxylate synthase (592 aa).

It belongs to the TPP enzyme family. MenD subfamily. In terms of assembly, homodimer. It depends on Mg(2+) as a cofactor. Mn(2+) is required as a cofactor. Requires thiamine diphosphate as cofactor.

It catalyses the reaction isochorismate + 2-oxoglutarate + H(+) = 5-enolpyruvoyl-6-hydroxy-2-succinyl-cyclohex-3-ene-1-carboxylate + CO2. The protein operates within quinol/quinone metabolism; 1,4-dihydroxy-2-naphthoate biosynthesis; 1,4-dihydroxy-2-naphthoate from chorismate: step 2/7. It functions in the pathway quinol/quinone metabolism; menaquinone biosynthesis. Its function is as follows. Catalyzes the thiamine diphosphate-dependent decarboxylation of 2-oxoglutarate and the subsequent addition of the resulting succinic semialdehyde-thiamine pyrophosphate anion to isochorismate to yield 2-succinyl-5-enolpyruvyl-6-hydroxy-3-cyclohexene-1-carboxylate (SEPHCHC). In Haloarcula marismortui (strain ATCC 43049 / DSM 3752 / JCM 8966 / VKM B-1809) (Halobacterium marismortui), this protein is 2-succinyl-5-enolpyruvyl-6-hydroxy-3-cyclohexene-1-carboxylate synthase.